The following is a 393-amino-acid chain: Putative acid--amine ligase HI_0929 (393 aa).

Arg103–Asp105 provides a ligand contact to ATP. Asp105, Glu117, and Asn119 together coordinate Mg(2+). Residues Lys267, Lys303, Gly310, Gln343, and Ala378 to Thr380 contribute to the ATP site.

This sequence belongs to the glutathionylspermidine synthase preATP-grasp family.

In terms of biological role, may be a ligase forming an amide bond. Shows ATPase activity. The polypeptide is Putative acid--amine ligase HI_0929 (Haemophilus influenzae (strain ATCC 51907 / DSM 11121 / KW20 / Rd)).